The sequence spans 246 residues: NAD(P)H-quinone oxidoreductase subunit K, organellar chromatophore (246 aa).

Residues Cys58, Cys59, Cys123, and Cys154 each contribute to the [4Fe-4S] cluster site.

It belongs to the complex I 20 kDa subunit family. In terms of assembly, NDH-1 is composed of 14 different subunits. Subunits nuoB, C, D, E, F, and G constitute the peripheral sector of the complex. [4Fe-4S] cluster is required as a cofactor.

Its subcellular location is the plastid. The protein localises to the organellar chromatophore thylakoid membrane. It catalyses the reaction a quinone + NADH + H(+) = a quinol + NAD(+). NDH-1 shuttles electrons from NADH, via FMN and iron-sulfur (Fe-S) centers, to quinones in the respiratory chain. Couples the redox reaction to proton translocation (for every two electrons transferred, four hydrogen ions are translocated across the cytoplasmic membrane), and thus conserves the redox energy in a proton gradient. The chain is NAD(P)H-quinone oxidoreductase subunit K, organellar chromatophore from Paulinella chromatophora.